The primary structure comprises 1786 residues: Transcription initiation factor TFIID subunit 1b (1786 aa).

Disordered stretches follow at residues 54–83 (EDYD…PVVL) and 350–372 (FGSR…PQLL). Over residues 61 to 83 (GQEKEHVPVEKSFDSEEREPVVL) the composition is skewed to basic and acidic residues. Residues 352–362 (SRGSQSTNEST) show a composition bias toward polar residues. In terms of domain architecture, Ubiquitin-like spans 574-650 (MTIVVKSLGG…VHLLRTKVHL (77 aa)). A compositionally biased stretch (basic residues) spans 1303–1313 (MKTNKHCPKYR). Disordered regions lie at residues 1303–1382 (MKTN…DVAA), 1397–1471 (LKIS…KDQA), and 1596–1634 (SERE…ESGQ). Residues 1357–1377 (TKISVNEATKVGDSTSKTPGS) are compositionally biased toward polar residues. Basic residues predominate over residues 1397-1407 (LKISSKAKPKA). Residues 1433 to 1464 (HNPSVSGQLLPSTETDQAASSRYTTSVPQPSL) show a composition bias toward polar residues. Coiled coils occupy residues 1591–1620 (REVI…LENY) and 1752–1786 (LADE…DSLR). Basic residues predominate over residues 1604 to 1613 (RKAKQKKKLQ). The Bromo domain occupies 1656-1774 (KRRKKGQVGL…DEYRDELKEA (119 aa)).

It belongs to the TAF1 family. In terms of assembly, component of the TFIID complex. TFIID is composed of TATA binding protein (TBP) and a number of TBP-associated factors (TAFs) whose MWs range from 14-217 kDa. Expressed in roots, shoots, leaves and inflorescences.

It is found in the nucleus. In terms of biological role, TAFs are components of the transcription factor IID (TFIID) complex that is essential for mediating regulation of RNA polymerase transcription. Core scaffold of the TFIID complex. Acts as a histone acetyltransferase involved in the light regulation of growth and gene expression. Required for H3K9, H3K27, and H4K12 acetylation on the target promoters. This is Transcription initiation factor TFIID subunit 1b (TAF1B) from Arabidopsis thaliana (Mouse-ear cress).